The chain runs to 112 residues: Putative movement protein (112 aa).

Residues 27–47 (IGIIMLCIVGIVVLWVLIILC) traverse the membrane as a helical segment. The disordered stretch occupies residues 77–112 (TGTPFEETGPHRERRWAERRTEATNQNNNDNVNRFS). The segment covering 84 to 98 (TGPHRERRWAERRTE) has biased composition (basic and acidic residues). The segment covering 101–112 (NQNNNDNVNRFS) has biased composition (polar residues).

This sequence belongs to the nanovirus movement protein family.

It localises to the host cell membrane. Functionally, may transport viral genome to neighboring plant cells directly through plasmosdesmata, without any budding. The movement protein allows efficient cell to cell propagation, by bypassing the host cell wall barrier. The protein is Putative movement protein (DNA-M) of Subterranean clover stunt virus (strain F) (SCSV).